We begin with the raw amino-acid sequence, 626 residues long: Chaperone protein HtpG (626 aa).

The segment at 1–341 (METKQFKAES…SEDLSLNISR (341 aa)) is a; substrate-binding. The tract at residues 342–552 (EMLQHDRQLK…EGEISIEMEK (211 aa)) is b. Positions 553 to 626 (ILSAMPNNEN…FSNSICKLMI (74 aa)) are c.

The protein belongs to the heat shock protein 90 family. In terms of assembly, homodimer.

The protein localises to the cytoplasm. Molecular chaperone. Has ATPase activity. In Alkaliphilus oremlandii (strain OhILAs) (Clostridium oremlandii (strain OhILAs)), this protein is Chaperone protein HtpG.